The following is a 185-amino-acid chain: MVKDVISNMNVHMGKSIESLRKEYQKVRTGRATTSLLDDIKIDSYGTLSPLNQVATLAIPEARTITISPWDSKMIAPIEKAIMNSNLGLNPANDGKMIRLVLPPLTEERRKDIVKQLKRDAEEAKVALRNIRRDAIDQLKKLEKDKSISEDELKRAEKDVQDSTNSHVAKVDEVLLHKEKEVMEV.

It belongs to the RRF family.

It is found in the cytoplasm. Responsible for the release of ribosomes from messenger RNA at the termination of protein biosynthesis. May increase the efficiency of translation by recycling ribosomes from one round of translation to another. The polypeptide is Ribosome-recycling factor (Geobacter sp. (strain M21)).